Here is a 729-residue protein sequence, read N- to C-terminus: Fatty acid oxidation complex subunit alpha (729 aa).

The segment at 1-189 (MLYKGDTLYL…KIGLVDGVVK (189 aa)) is enoyl-CoA hydratase/isomerase. Residue Asp-296 participates in substrate binding. The segment at 311–729 (ETPKQAAVLG…ARPVGDLKTA (419 aa)) is 3-hydroxyacyl-CoA dehydrogenase. Residues Met-324, Asp-343, 400-402 (VVE), Lys-407, and Ser-429 each bind NAD(+). Catalysis depends on His-450, which acts as the For 3-hydroxyacyl-CoA dehydrogenase activity. Residue Asn-453 participates in NAD(+) binding. Residues Asn-500 and Tyr-660 each coordinate substrate. The interval 708-729 (RHNEPYYPPVEPARPVGDLKTA) is disordered.

The protein in the N-terminal section; belongs to the enoyl-CoA hydratase/isomerase family. In the C-terminal section; belongs to the 3-hydroxyacyl-CoA dehydrogenase family. In terms of assembly, heterotetramer of two alpha chains (FadB) and two beta chains (FadA).

The catalysed reaction is a (3S)-3-hydroxyacyl-CoA + NAD(+) = a 3-oxoacyl-CoA + NADH + H(+). It carries out the reaction a (3S)-3-hydroxyacyl-CoA = a (2E)-enoyl-CoA + H2O. The enzyme catalyses a 4-saturated-(3S)-3-hydroxyacyl-CoA = a (3E)-enoyl-CoA + H2O. It catalyses the reaction (3S)-3-hydroxybutanoyl-CoA = (3R)-3-hydroxybutanoyl-CoA. The catalysed reaction is a (3Z)-enoyl-CoA = a 4-saturated (2E)-enoyl-CoA. It carries out the reaction a (3E)-enoyl-CoA = a 4-saturated (2E)-enoyl-CoA. Its pathway is lipid metabolism; fatty acid beta-oxidation. Its function is as follows. Involved in the aerobic and anaerobic degradation of long-chain fatty acids via beta-oxidation cycle. Catalyzes the formation of 3-oxoacyl-CoA from enoyl-CoA via L-3-hydroxyacyl-CoA. It can also use D-3-hydroxyacyl-CoA and cis-3-enoyl-CoA as substrate. The chain is Fatty acid oxidation complex subunit alpha from Escherichia coli (strain UTI89 / UPEC).